The primary structure comprises 344 residues: Transcription factor JunB (344 aa).

Residues Lys-4, Lys-33, and Lys-36 each participate in a glycyl lysine isopeptide (Lys-Gly) (interchain with G-Cter in SUMO2) cross-link. The segment covering 51–65 has biased composition (gly residues); sequence KGPGARGPGPEGSGA. Residues 51 to 75 are disordered; the sequence is KGPGARGPGPEGSGAGSYFSGQGSD. Residue Lys-81 forms a Glycyl lysine isopeptide (Lys-Gly) (interchain with G-Cter in SUMO2) linkage. 2 positions are modified to phosphothreonine: Thr-102 and Thr-104. Ser-117 is modified (phosphoserine). Lys-138 is covalently cross-linked (Glycyl lysine isopeptide (Lys-Gly) (interchain with G-Cter in SUMO2)). Disordered regions lie at residues 181 to 202 and 237 to 257; these read NLSSYSPASAPSGGSGTAVGTG and KEEPQTVPEARSRDATPPVSP. The segment covering 183-192 has biased composition (low complexity); it reads SSYSPASAPS. Lys-237 bears the N6-acetyllysine; alternate mark. Lys-237 participates in a covalent cross-link: Glycyl lysine isopeptide (Lys-Gly) (interchain with G-Cter in SUMO1); alternate. A Glycyl lysine isopeptide (Lys-Gly) (interchain with G-Cter in SUMO2); alternate cross-link involves residue Lys-237. Residues 237–250 are compositionally biased toward basic and acidic residues; the sequence is KEEPQTVPEARSRD. At Ser-248 the chain carries Phosphoserine. Thr-252 is subject to Phosphothreonine. Ser-256 carries the phosphoserine modification. A basic motif region spans residues 265–292; it reads RIKVERKRLRNRLAATKCRKRKLERIAR. A bZIP domain is found at 265–328; it reads RIKVERKRLR…AQLKQKVMTH (64 aa). The tract at residues 293–321 is leucine-zipper; it reads LEDKVKTLKAENAGLSSAAGLLREQVAQL. Lys-340 participates in a covalent cross-link: Glycyl lysine isopeptide (Lys-Gly) (interchain with G-Cter in SUMO2).

This sequence belongs to the bZIP family. Jun subfamily. Binds DNA as a homodimer or as a heterodimer with another member of the Jun/Fos family. Component of an AP-1 transcription factor complex composed of JUN-FOS heterodimers. As part of the AP-1 transcription factor complex, forms heterodimers with FOSB, thereby binding to the AP-1 consensus sequence and stimulating transcription. Interacts with NFE2 (via its WW domains). In terms of processing, ubiquitinated by ITCH, leading to its degradation.

The protein resides in the nucleus. Its function is as follows. Transcription factor involved in regulating gene activity following the primary growth factor response. Binds to the DNA sequence 5'-TGA[GC]TCA-3'. Heterodimerizes with proteins of the FOS family to form an AP-1 transcription complex, thereby enhancing its DNA binding activity to an AP-1 consensus sequence 5'-TGA[GC]TCA-3' and enhancing its transcriptional activity. This Mus musculus (Mouse) protein is Transcription factor JunB (Junb).